A 1090-amino-acid polypeptide reads, in one-letter code: Protein CHROMATIN REMODELING 24 (1090 aa).

2 disordered regions span residues 1-51 (MAEN…MIKL) and 247-273 (VGKQ…NLDR). The short motif at 44 to 51 (TKKSMIKL) is the Nuclear localization signal element. Residues 256–273 (RHFDDNSEDNRQGYNLDR) show a composition bias toward basic and acidic residues. The region spanning 389–564 (WSLHTQGKGG…WALFNFSCPG (176 aa)) is the Helicase ATP-binding domain. 402–409 (DDMGLGKT) provides a ligand contact to ATP. The DEAH box motif lies at 515-518 (DEGH). Positions 736–895 (FIMSLLENLI…IRYFSQQDLR (160 aa)) constitute a Helicase C-terminal domain. Residues 1043–1069 (DGGAKIQKQIAELTRELKDMKAAERIN) adopt a coiled-coil conformation.

This sequence belongs to the SNF2/RAD54 helicase family.

It is found in the nucleus. DNA helicase that acts as an essential component of the spindle assembly checkpoint. Probable chromatin remodeling factor that regulate homologous recombination (HR) and non-homologous recombination (NHR). This chain is Protein CHROMATIN REMODELING 24, found in Arabidopsis thaliana (Mouse-ear cress).